The chain runs to 257 residues: Undecaprenyl-diphosphatase (257 aa).

Transmembrane regions (helical) follow at residues L4–S24, S41–W61, V74–T94, P103–L123, L133–I153, S173–I193, V209–I229, and R236–L256.

The protein belongs to the UppP family.

The protein resides in the cell inner membrane. The catalysed reaction is di-trans,octa-cis-undecaprenyl diphosphate + H2O = di-trans,octa-cis-undecaprenyl phosphate + phosphate + H(+). Functionally, catalyzes the dephosphorylation of undecaprenyl diphosphate (UPP). Confers resistance to bacitracin. This chain is Undecaprenyl-diphosphatase, found in Rhodopirellula baltica (strain DSM 10527 / NCIMB 13988 / SH1).